Consider the following 321-residue polypeptide: MATH domain and coiled-coil domain-containing protein At3g58260 (321 aa).

One can recognise an MATH domain in the interval 6–135 (NNTFTWVIKN…NDEVMVAVAV (130 aa)). Residues 232–283 (KLDWLEKKLDELFEKKKEEADKIRMQNIEEELKDLRQKCSSLEALLKKEKTG) adopt a coiled-coil conformation.

The sequence is that of MATH domain and coiled-coil domain-containing protein At3g58260 from Arabidopsis thaliana (Mouse-ear cress).